The chain runs to 132 residues: Phosphoribosyl-AMP cyclohydrolase (132 aa).

Position 79 (Asp79) interacts with Mg(2+). A Zn(2+)-binding site is contributed by Cys80. Mg(2+)-binding residues include Asp81 and Asp83. Zn(2+) contacts are provided by Cys100 and Cys107.

This sequence belongs to the PRA-CH family. Homodimer. Mg(2+) serves as cofactor. Zn(2+) is required as a cofactor.

It localises to the cytoplasm. It catalyses the reaction 1-(5-phospho-beta-D-ribosyl)-5'-AMP + H2O = 1-(5-phospho-beta-D-ribosyl)-5-[(5-phospho-beta-D-ribosylamino)methylideneamino]imidazole-4-carboxamide. Its pathway is amino-acid biosynthesis; L-histidine biosynthesis; L-histidine from 5-phospho-alpha-D-ribose 1-diphosphate: step 3/9. Its function is as follows. Catalyzes the hydrolysis of the adenine ring of phosphoribosyl-AMP. This Acidovorax sp. (strain JS42) protein is Phosphoribosyl-AMP cyclohydrolase.